The chain runs to 308 residues: MNWLPEAEAEEHLKGILSGDFFDGLTNHLDCPLEDIDSTNGEGDWVARFQDLEPPPLDMFPALPSDLTSCPKGAARVRIPNNMIPALKQSCSSEALSGINSTPHQSSAPPDIKVSYLFQSLTPVSVLENSYGSLSTQNSGSQRLAFPVKGMRSKRRRPTTVRLSYLFPFEPRKSTPGESVTEGYYSSEQHAKKKRKIHLITHTESSTLESSKSDGIVRICTHCETITTPQWRQGPSGPKTLCNACGVRFKSGRLVPEYRPASSPTFIPSVHSNSHRKIIEMRKKDDEFDTSMIRSDIQKVKQGRKKMV.

Residues 214 to 268 (DGIVRICTHCETITTPQWRQGPSGPKTLCNACGVRFKSGRLVPEYRPASSPTFIP) form a GATA-type zinc finger.

This sequence belongs to the type IV zinc-finger family. Class A subfamily.

It localises to the nucleus. In terms of biological role, transcriptional activator that specifically binds 5'-GATA-3' or 5'-GAT-3' motifs within gene promoters. May be involved in the regulation of some light-responsive genes. The sequence is that of GATA transcription factor 10 (GATA10) from Arabidopsis thaliana (Mouse-ear cress).